The sequence spans 379 residues: Alcohol dehydrogenase class-3 (379 aa).

Residues Cys47, His69, Cys99, Cys102, Cys105, Cys113, and Cys176 each coordinate Zn(2+).

Belongs to the zinc-containing alcohol dehydrogenase family. Class-III subfamily. As to quaternary structure, homodimer. It depends on Zn(2+) as a cofactor.

Its subcellular location is the cytoplasm. The catalysed reaction is a primary alcohol + NAD(+) = an aldehyde + NADH + H(+). It catalyses the reaction a secondary alcohol + NAD(+) = a ketone + NADH + H(+). It carries out the reaction S-(hydroxymethyl)glutathione + NADP(+) = S-formylglutathione + NADPH + H(+). The enzyme catalyses S-(hydroxymethyl)glutathione + NAD(+) = S-formylglutathione + NADH + H(+). Its function is as follows. Class-III ADH is remarkably ineffective in oxidizing ethanol, but it readily catalyzes the oxidation of long-chain primary alcohols and the oxidation of S-(hydroxymethyl) glutathione. This is Alcohol dehydrogenase class-3 (adh5) from Dictyostelium discoideum (Social amoeba).